We begin with the raw amino-acid sequence, 362 residues long: N-acylethanolamine-hydrolyzing acid amidase (362 aa).

The N-terminal stretch at 1-33 (MGTLATRAACHGAHLALALLLLLSLSGPWLSAV) is a signal peptide. N-linked (GlcNAc...) asparagine glycosylation is found at asparagine 42 and asparagine 112. The active-site Nucleophile is the cysteine 131. Asparagine 314 and asparagine 338 each carry an N-linked (GlcNAc...) asparagine glycan.

This sequence belongs to the acid ceramidase family. In terms of assembly, heterodimer of an alpha and a beta subunit, produced by autocatalytic cleavage. Post-translationally, N-glycosylated. Tunicamycin treatment causes a reduction in specific activity against N-palmitoylethanolamine. Autoproteolytic cleavage at pH 4.5 gives rise to the alpha and beta subunit. Cleavage gives rise to a conformation change that activates the enzyme. The same catalytic Cys residue mediates the autoproteolytic cleavage and subsequent hydrolysis of lipid substrates.

The protein localises to the lysosome. The protein resides in the membrane. It carries out the reaction N-hexadecanoylethanolamine + H2O = ethanolamine + hexadecanoate. It catalyses the reaction an N-(long-chain fatty acyl)ethanolamine + H2O = a long-chain fatty acid + ethanolamine. The enzyme catalyses N-dodecanoylethanolamine + H2O = dodecanoate + ethanolamine. The catalysed reaction is N-tetradecanoylethanolamine + H2O = tetradecanoate + ethanolamine. It carries out the reaction an N-acylsphing-4-enine + H2O = sphing-4-enine + a fatty acid. It catalyses the reaction N-hexadecanoylsphing-4-enine + H2O = sphing-4-enine + hexadecanoate. The enzyme catalyses N-dodecanoylsphing-4-enine + H2O = dodecanoate + sphing-4-enine. Its pathway is lipid metabolism; fatty acid metabolism. In terms of biological role, degrades bioactive fatty acid amides to their corresponding acids, with the following preference: N-palmitoylethanolamine &gt; N-myristoylethanolamine &gt; N-stearoylethanolamine &gt; N-oleoylethanolamine &gt; N-linoleoylethanolamine &gt; N-arachidonoylethanolamine. The chain is N-acylethanolamine-hydrolyzing acid amidase from Mus musculus (Mouse).